The primary structure comprises 115 residues: Large ribosomal subunit protein bL19 (115 aa).

The protein belongs to the bacterial ribosomal protein bL19 family.

In terms of biological role, this protein is located at the 30S-50S ribosomal subunit interface and may play a role in the structure and function of the aminoacyl-tRNA binding site. The sequence is that of Large ribosomal subunit protein bL19 from Leifsonia xyli subsp. xyli (strain CTCB07).